The following is a 118-amino-acid chain: Large ribosomal subunit protein bL19 (118 aa).

The protein belongs to the bacterial ribosomal protein bL19 family.

Functionally, this protein is located at the 30S-50S ribosomal subunit interface and may play a role in the structure and function of the aminoacyl-tRNA binding site. In Helicobacter acinonychis (strain Sheeba), this protein is Large ribosomal subunit protein bL19.